The sequence spans 465 residues: Ribulose bisphosphate carboxylase large chain (465 aa).

Lys-4 carries the N6,N6,N6-trimethyllysine modification. Positions 113 and 163 each coordinate substrate. Lys-165 (proton acceptor) is an active-site residue. Position 167 (Lys-167) interacts with substrate. Mg(2+) is bound by residues Lys-191, Asp-193, and Glu-194. At Lys-191 the chain carries N6-carboxylysine. Catalysis depends on His-284, which acts as the Proton acceptor. Substrate-binding residues include Arg-285, His-317, and Ser-369.

The protein belongs to the RuBisCO large chain family. Type I subfamily. As to quaternary structure, heterohexadecamer of 8 large chains and 8 small chains; disulfide-linked. The disulfide link is formed within the large subunit homodimers. The cofactor is Mg(2+). In terms of processing, the disulfide bond which can form in the large chain dimeric partners within the hexadecamer appears to be associated with oxidative stress and protein turnover.

The protein resides in the plastid. It is found in the chloroplast. It catalyses the reaction 2 (2R)-3-phosphoglycerate + 2 H(+) = D-ribulose 1,5-bisphosphate + CO2 + H2O. The enzyme catalyses D-ribulose 1,5-bisphosphate + O2 = 2-phosphoglycolate + (2R)-3-phosphoglycerate + 2 H(+). In terms of biological role, ruBisCO catalyzes two reactions: the carboxylation of D-ribulose 1,5-bisphosphate, the primary event in carbon dioxide fixation, as well as the oxidative fragmentation of the pentose substrate in the photorespiration process. Both reactions occur simultaneously and in competition at the same active site. This Cornus canadensis (Bunchberry dogwood) protein is Ribulose bisphosphate carboxylase large chain.